The following is a 534-amino-acid chain: Phosphoenolpyruvate carboxykinase (ATP) (534 aa).

Positions 59, 200, and 206 each coordinate substrate. Residues K206, H225, and G242–T250 each bind ATP. Positions 206 and 225 each coordinate Mn(2+). D263 provides a ligand contact to Mn(2+). ATP-binding positions include E291, R327, R443–I444, and T449. R327 provides a ligand contact to substrate.

This sequence belongs to the phosphoenolpyruvate carboxykinase (ATP) family. Mn(2+) is required as a cofactor.

It localises to the cytoplasm. It catalyses the reaction oxaloacetate + ATP = phosphoenolpyruvate + ADP + CO2. Its pathway is carbohydrate biosynthesis; gluconeogenesis. Functionally, involved in the gluconeogenesis. Catalyzes the conversion of oxaloacetate (OAA) to phosphoenolpyruvate (PEP) through direct phosphoryl transfer between the nucleoside triphosphate and OAA. In Lachnospira eligens (strain ATCC 27750 / DSM 3376 / VPI C15-48 / C15-B4) (Eubacterium eligens), this protein is Phosphoenolpyruvate carboxykinase (ATP).